The following is a 200-amino-acid chain: MAFAEHSPLTPHRRDLCSRSIWLARKIRSDLTALMEAYVKHQGLNENINLDSVDGVPMASTDRWSELTEAERLQENLRAYRTFHVMLARLLEDQREHFTPAEDDFHQAIHTIVLQVAAFAYQLEELMVLLEHKVPPSEADGTPLSVGGGGLFEKKLWGLKVLQELSQWTVRSIRDLRVISSHQAGVPAHGSHHVAKDKKM.

Belongs to the CNTF family. In terms of tissue distribution, nervous system.

It is found in the cytoplasm. In terms of biological role, CNTF is a survival factor for various neuronal cell types. Seems to prevent the degeneration of motor axons after axotomy. The protein is Ciliary neurotrophic factor (CNTF) of Sus scrofa (Pig).